Reading from the N-terminus, the 484-residue chain is UDP-N-acetylmuramate--L-alanine ligase (484 aa).

123-129 serves as a coordination point for ATP; it reads GTHGKTT.

This sequence belongs to the MurCDEF family.

The protein resides in the cytoplasm. It catalyses the reaction UDP-N-acetyl-alpha-D-muramate + L-alanine + ATP = UDP-N-acetyl-alpha-D-muramoyl-L-alanine + ADP + phosphate + H(+). It functions in the pathway cell wall biogenesis; peptidoglycan biosynthesis. Functionally, cell wall formation. The chain is UDP-N-acetylmuramate--L-alanine ligase from Pseudomonas fluorescens (strain ATCC BAA-477 / NRRL B-23932 / Pf-5).